A 211-amino-acid chain; its full sequence is Ribosome maturation factor RimM (211 aa).

The 72-residue stretch at 111–182 folds into the PRC barrel domain; sequence PDAWYDHQLV…TLVVTPPLGL (72 aa). The tract at residues 184–211 is disordered; sequence EEIPDETPTAEPTPAEAAEPAPEGDDAR. The segment covering 189–204 has biased composition (low complexity); the sequence is ETPTAEPTPAEAAEPA.

Belongs to the RimM family. As to quaternary structure, binds ribosomal protein uS19.

Its subcellular location is the cytoplasm. Functionally, an accessory protein needed during the final step in the assembly of 30S ribosomal subunit, possibly for assembly of the head region. Essential for efficient processing of 16S rRNA. May be needed both before and after RbfA during the maturation of 16S rRNA. It has affinity for free ribosomal 30S subunits but not for 70S ribosomes. The polypeptide is Ribosome maturation factor RimM (Clavibacter michiganensis subsp. michiganensis (strain NCPPB 382)).